Here is a 116-residue protein sequence, read N- to C-terminus: UPF0102 protein IL0423 (116 aa).

Belongs to the UPF0102 family.

This chain is UPF0102 protein IL0423, found in Idiomarina loihiensis (strain ATCC BAA-735 / DSM 15497 / L2-TR).